We begin with the raw amino-acid sequence, 260 residues long: Acetylglutamate kinase (260 aa).

Substrate contacts are provided by residues 45–46 (GG), arginine 67, and asparagine 159.

The protein belongs to the acetylglutamate kinase family. ArgB subfamily.

The protein localises to the cytoplasm. The catalysed reaction is N-acetyl-L-glutamate + ATP = N-acetyl-L-glutamyl 5-phosphate + ADP. The protein operates within amino-acid biosynthesis; L-arginine biosynthesis; N(2)-acetyl-L-ornithine from L-glutamate: step 2/4. Its function is as follows. Catalyzes the ATP-dependent phosphorylation of N-acetyl-L-glutamate. The polypeptide is Acetylglutamate kinase (Colwellia psychrerythraea (strain 34H / ATCC BAA-681) (Vibrio psychroerythus)).